The following is a 375-amino-acid chain: 1-deoxy-D-xylulose 5-phosphate reductoisomerase (375 aa).

Thr-10, Gly-11, Ser-12, Val-13, Lys-37, and Asn-114 together coordinate NADPH. Lys-115 lines the 1-deoxy-D-xylulose 5-phosphate pocket. Glu-116 contributes to the NADPH binding site. Asp-136 contributes to the Mn(2+) binding site. 4 residues coordinate 1-deoxy-D-xylulose 5-phosphate: Ser-137, Glu-138, Ser-162, and His-185. A Mn(2+)-binding site is contributed by Glu-138. NADPH is bound at residue Gly-191. 1-deoxy-D-xylulose 5-phosphate-binding residues include Ser-198, Asn-203, Lys-204, and Glu-207. Glu-207 contacts Mn(2+).

It belongs to the DXR family. It depends on Mg(2+) as a cofactor. Requires Mn(2+) as cofactor.

It catalyses the reaction 2-C-methyl-D-erythritol 4-phosphate + NADP(+) = 1-deoxy-D-xylulose 5-phosphate + NADPH + H(+). The protein operates within isoprenoid biosynthesis; isopentenyl diphosphate biosynthesis via DXP pathway; isopentenyl diphosphate from 1-deoxy-D-xylulose 5-phosphate: step 1/6. Catalyzes the NADPH-dependent rearrangement and reduction of 1-deoxy-D-xylulose-5-phosphate (DXP) to 2-C-methyl-D-erythritol 4-phosphate (MEP). In Sulfurihydrogenibium sp. (strain YO3AOP1), this protein is 1-deoxy-D-xylulose 5-phosphate reductoisomerase.